Reading from the N-terminus, the 726-residue chain is Ribonuclease R (726 aa).

The 329-residue stretch at 262–590 (RIDLRHLPFF…LVHRVIKNLL (329 aa)) folds into the RNB domain. The region spanning 642–723 (GDVLTGVISN…NERKIELSLY (82 aa)) is the S1 motif domain.

Belongs to the RNR ribonuclease family. RNase R subfamily. Monomer.

It localises to the cytoplasm. The enzyme catalyses Exonucleolytic cleavage in the 3'- to 5'-direction to yield nucleoside 5'-phosphates.. In terms of biological role, 3'-5' exoribonuclease that releases 5'-nucleoside monophosphates and is involved in maturation of structured RNAs. In Buchnera aphidicola subsp. Schizaphis graminum (strain Sg), this protein is Ribonuclease R.